We begin with the raw amino-acid sequence, 259 residues long: Ubiquinone/menaquinone biosynthesis C-methyltransferase UbiE (259 aa).

S-adenosyl-L-methionine is bound by residues Thr-82, Asp-103, 131 to 132 (NA), and Ser-148.

It belongs to the class I-like SAM-binding methyltransferase superfamily. MenG/UbiE family.

It carries out the reaction a 2-demethylmenaquinol + S-adenosyl-L-methionine = a menaquinol + S-adenosyl-L-homocysteine + H(+). It catalyses the reaction a 2-methoxy-6-(all-trans-polyprenyl)benzene-1,4-diol + S-adenosyl-L-methionine = a 5-methoxy-2-methyl-3-(all-trans-polyprenyl)benzene-1,4-diol + S-adenosyl-L-homocysteine + H(+). It participates in quinol/quinone metabolism; menaquinone biosynthesis; menaquinol from 1,4-dihydroxy-2-naphthoate: step 2/2. It functions in the pathway cofactor biosynthesis; ubiquinone biosynthesis. Its function is as follows. Methyltransferase required for the conversion of demethylmenaquinol (DMKH2) to menaquinol (MKH2) and the conversion of 2-polyprenyl-6-methoxy-1,4-benzoquinol (DDMQH2) to 2-polyprenyl-3-methyl-6-methoxy-1,4-benzoquinol (DMQH2). This chain is Ubiquinone/menaquinone biosynthesis C-methyltransferase UbiE, found in Vibrio parahaemolyticus serotype O3:K6 (strain RIMD 2210633).